The chain runs to 267 residues: GTP cyclohydrolase FolE2 (267 aa).

Belongs to the GTP cyclohydrolase IV family.

The catalysed reaction is GTP + H2O = 7,8-dihydroneopterin 3'-triphosphate + formate + H(+). It functions in the pathway cofactor biosynthesis; 7,8-dihydroneopterin triphosphate biosynthesis; 7,8-dihydroneopterin triphosphate from GTP: step 1/1. Functionally, converts GTP to 7,8-dihydroneopterin triphosphate. In Citrifermentans bemidjiense (strain ATCC BAA-1014 / DSM 16622 / JCM 12645 / Bem) (Geobacter bemidjiensis), this protein is GTP cyclohydrolase FolE2.